The following is a 446-amino-acid chain: Histidine--tRNA ligase (446 aa).

This sequence belongs to the class-II aminoacyl-tRNA synthetase family. As to quaternary structure, homodimer.

It localises to the cytoplasm. It carries out the reaction tRNA(His) + L-histidine + ATP = L-histidyl-tRNA(His) + AMP + diphosphate + H(+). In Burkholderia ambifaria (strain MC40-6), this protein is Histidine--tRNA ligase.